Here is a 340-residue protein sequence, read N- to C-terminus: Fructose-1,6-bisphosphatase class 1 (340 aa).

The Mg(2+) site is built by Glu107, Asp126, Leu128, and Asp129. Position 215 (Asn215) interacts with substrate. Position 287 (Glu287) interacts with Mg(2+).

The protein belongs to the FBPase class 1 family. Homotetramer. Requires Mg(2+) as cofactor.

It localises to the cytoplasm. It catalyses the reaction beta-D-fructose 1,6-bisphosphate + H2O = beta-D-fructose 6-phosphate + phosphate. Its pathway is carbohydrate biosynthesis; gluconeogenesis. The protein is Fructose-1,6-bisphosphatase class 1 of Brucella ovis (strain ATCC 25840 / 63/290 / NCTC 10512).